The primary structure comprises 200 residues: Peptidyl-tRNA hydrolase (200 aa).

Residue Phe-16 participates in tRNA binding. His-21 (proton acceptor) is an active-site residue. Phe-67, Asn-69, and Asn-115 together coordinate tRNA.

Belongs to the PTH family. As to quaternary structure, monomer.

It is found in the cytoplasm. It catalyses the reaction an N-acyl-L-alpha-aminoacyl-tRNA + H2O = an N-acyl-L-amino acid + a tRNA + H(+). Hydrolyzes ribosome-free peptidyl-tRNAs (with 1 or more amino acids incorporated), which drop off the ribosome during protein synthesis, or as a result of ribosome stalling. Its function is as follows. Catalyzes the release of premature peptidyl moieties from peptidyl-tRNA molecules trapped in stalled 50S ribosomal subunits, and thus maintains levels of free tRNAs and 50S ribosomes. The protein is Peptidyl-tRNA hydrolase of Prochlorococcus marinus (strain MIT 9215).